Consider the following 329-residue polypeptide: Sulfate-binding protein (329 aa).

Residues 1–19 form the signal peptide; sequence MKKWGVGFTLLLASTSILA.

This sequence belongs to the prokaryotic sulfate-binding protein family.

It localises to the periplasm. Functionally, this protein specifically binds sulfate and is involved in its transmembrane transport. In Salmonella typhimurium (strain LT2 / SGSC1412 / ATCC 700720), this protein is Sulfate-binding protein (sbp).